We begin with the raw amino-acid sequence, 698 residues long: Serine/alanine racemase (698 aa).

Residues 1-10 lie on the Cytoplasmic side of the membrane; the sequence is MKNKGIDQFR. Residues 11-31 traverse the membrane as a helical segment; it reads VIAAMMVVAIHCLPLHYLWPE. Over 32 to 42 the chain is Extracellular; sequence GDILITLTIFR. A helical membrane pass occupies residues 43–63; that stretch reads VAVPFFFMISGYYVFAELAVA. Topologically, residues 64 to 81 are cytoplasmic; sequence NSYPSRQRVFNFIKKQLK. Residues 82–102 form a helical membrane-spanning segment; the sequence is VYLLATLMFLPLALYSQTIGF. Over 103 to 121 the chain is Extracellular; sequence DLPVGTLVQVLLVNGILYH. A helical transmembrane segment spans residues 122 to 142; the sequence is LWYFPALITGSLLLTSLLIHV. Residues 143–147 are Cytoplasmic-facing; that stretch reads SFKKV. A helical transmembrane segment spans residues 148-168; it reads FWLAAGLYLIGLGGDSWFGLI. The Extracellular portion of the chain corresponds to 169–183; the sequence is QQTPIEPFYTAVFHL. A helical transmembrane segment spans residues 184-204; that stretch reads LDGTRNGIFFTPLFLCLGVLV. Residues 205-216 are Cytoplasmic-facing; the sequence is RKQSEKRSLSKT. A helical transmembrane segment spans residues 217–237; that stretch reads ALFFLISLIGLLIESAYLHGF. Residues 238 to 244 lie on the Extracellular side of the membrane; sequence SIPKHDS. A helical transmembrane segment spans residues 245-265; it reads MYLFLPVVLFFLFPLILRWHP. The Cytoplasmic segment spans residues 266 to 274; sequence HRTWKHPGQ. The helical transmembrane segment at 275–295 threads the bilayer; sequence LSLWLYLLHPYTIAGTHFLSQ. Residues 296-301 lie on the Extracellular side of the membrane; sequence KISILQ. A helical transmembrane segment spans residues 302–322; the sequence is NNLINYLVVLILTIGFICLFL. Residues 323–698 lie on the Cytoplasmic side of the membrane; the sequence is RQKHSWFRHK…IGPRVSARIK (376 aa). The segment at 332–698 is racemase; it reads KQTTPVKRAV…IGPRVSARIK (367 aa). Catalysis depends on K371, which acts as the Proton acceptor. K371 is modified (N6-(pyridoxal phosphate)lysine). Residue R465 coordinates substrate. Y597 serves as the catalytic Proton acceptor. Residue M646 coordinates substrate.

In the N-terminal section; belongs to the acyltransferase 3 family. This sequence in the C-terminal section; belongs to the alanine racemase family. In terms of assembly, homodimer. It depends on pyridoxal 5'-phosphate as a cofactor.

It localises to the cell membrane. The catalysed reaction is L-alanine = D-alanine. The enzyme catalyses L-serine = D-serine. It functions in the pathway amino-acid biosynthesis; D-alanine biosynthesis; D-alanine from L-alanine: step 1/1. Catalyzes the interconversion of L-serine and D-serine, and L-alanine and D-alanine. L-alanine is racemized at a rate that is 14% of that of L-serine. Together with VanC/VanC1 and VanXYC, required for vancomycin resistance in E.gallinarum strain BM4174. This chain is Serine/alanine racemase, found in Enterococcus gallinarum.